A 401-amino-acid polypeptide reads, in one-letter code: GRIP domain-containing protein C119.12 (401 aa).

Residues 7–296 (NETKLVENEN…TLLIGKLQHE (290 aa)) are a coiled coil. Residues 315 to 366 (NNAEKIDKQLISNLFVSFLTLPRADTKRFEILQLISSVLDWNDTQREQTGLQ) form the GRIP domain.

It is found in the golgi apparatus lumen. The sequence is that of GRIP domain-containing protein C119.12 from Schizosaccharomyces pombe (strain 972 / ATCC 24843) (Fission yeast).